We begin with the raw amino-acid sequence, 509 residues long: ATP synthase subunit alpha (509 aa).

169–176 (GDRQTGKT) provides a ligand contact to ATP.

This sequence belongs to the ATPase alpha/beta chains family. In terms of assembly, F-type ATPases have 2 components, CF(1) - the catalytic core - and CF(0) - the membrane proton channel. CF(1) has five subunits: alpha(3), beta(3), gamma(1), delta(1), epsilon(1). CF(0) has three main subunits: a(1), b(2) and c(9-12). The alpha and beta chains form an alternating ring which encloses part of the gamma chain. CF(1) is attached to CF(0) by a central stalk formed by the gamma and epsilon chains, while a peripheral stalk is formed by the delta and b chains.

It is found in the cell inner membrane. It carries out the reaction ATP + H2O + 4 H(+)(in) = ADP + phosphate + 5 H(+)(out). In terms of biological role, produces ATP from ADP in the presence of a proton gradient across the membrane. The alpha chain is a regulatory subunit. The sequence is that of ATP synthase subunit alpha from Zymomonas mobilis subsp. mobilis (strain ATCC 31821 / ZM4 / CP4).